The primary structure comprises 819 residues: Ent-beyerene synthase KSL2, chloroplastic (819 aa).

The N-terminal 58 residues, 1-58, are a transit peptide targeting the chloroplast; the sequence is MLPCLFPAYGSVVACKPSAIDRSPFGLLSQPKQTNRTLIRRPKVTKAFMAIEAMRHCS. Low complexity predominate over residues 58–76; the sequence is SSSSSSEEGGAAATTAARS. The segment at 58–77 is disordered; that stretch reads SSSSSSEEGGAAATTAARSA. Mg(2+) contacts are provided by D567, D571, N711, S715, and E719. A DDXXD motif motif is present at residues 567–571; it reads DDFFD.

The protein belongs to the terpene synthase family. It depends on Mg(2+) as a cofactor. In terms of tissue distribution, expressed in roots. Highly expressed in stems, flowers and panicle.

The protein localises to the plastid. It is found in the chloroplast. It catalyses the reaction ent-copalyl diphosphate = ent-beyerene + diphosphate. The enzyme catalyses ent-copalyl diphosphate = ent-kaur-16-ene + diphosphate. It functions in the pathway secondary metabolite biosynthesis; terpenoid biosynthesis. Its function is as follows. Diterpene cyclase involved in jasmonic acid-dependent defense mechanisms in roots by mediating the biosynthesis of labdane-related diterpenoids (LRDs) natural products such as ent-beyerene, an antimicrobial compound. Catalyzes the cyclization of ent-CDP into ent-beyerene as a major and ent-kaurene as a minor product. May be involved in the catalysis of an early step of the gibberellin (GA) biosynthesis pathway. The polypeptide is Ent-beyerene synthase KSL2, chloroplastic (Oryza sativa subsp. japonica (Rice)).